A 431-amino-acid polypeptide reads, in one-letter code: Enolase (431 aa).

Gln-167 provides a ligand contact to (2R)-2-phosphoglycerate. Glu-209 acts as the Proton donor in catalysis. Mg(2+)-binding residues include Asp-246, Glu-290, and Asp-317. Residues Lys-342, Arg-371, Ser-372, and Lys-393 each coordinate (2R)-2-phosphoglycerate. Catalysis depends on Lys-342, which acts as the Proton acceptor.

The protein belongs to the enolase family. As to quaternary structure, component of the RNA degradosome, a multiprotein complex involved in RNA processing and mRNA degradation. The cofactor is Mg(2+).

It is found in the cytoplasm. It localises to the secreted. The protein resides in the cell surface. It catalyses the reaction (2R)-2-phosphoglycerate = phosphoenolpyruvate + H2O. Its pathway is carbohydrate degradation; glycolysis; pyruvate from D-glyceraldehyde 3-phosphate: step 4/5. Functionally, catalyzes the reversible conversion of 2-phosphoglycerate (2-PG) into phosphoenolpyruvate (PEP). It is essential for the degradation of carbohydrates via glycolysis. This is Enolase from Yersinia enterocolitica serotype O:8 / biotype 1B (strain NCTC 13174 / 8081).